The primary structure comprises 145 residues: Ribonuclease H (145 aa).

The RNase H type-1 domain maps to 2–143 (SKKEVIIYTD…ADSLARKAII (142 aa)). Residues Asp11, Glu49, Asp71, and Asp135 each contribute to the Mg(2+) site.

This sequence belongs to the RNase H family. In terms of assembly, monomer. Mg(2+) serves as cofactor.

The protein localises to the cytoplasm. The enzyme catalyses Endonucleolytic cleavage to 5'-phosphomonoester.. In terms of biological role, endonuclease that specifically degrades the RNA of RNA-DNA hybrids. This chain is Ribonuclease H, found in Wolbachia pipientis wMel.